The chain runs to 78 residues: Acyl carrier protein (78 aa).

Residues 1–76 (MSVAEKVKEI…DAISFIEKKK (76 aa)) form the Carrier domain. Residue S36 is modified to O-(pantetheine 4'-phosphoryl)serine.

Belongs to the acyl carrier protein (ACP) family. In terms of processing, 4'-phosphopantetheine is transferred from CoA to a specific serine of apo-ACP by AcpS. This modification is essential for activity because fatty acids are bound in thioester linkage to the sulfhydryl of the prosthetic group.

It is found in the cytoplasm. It functions in the pathway lipid metabolism; fatty acid biosynthesis. Its function is as follows. Carrier of the growing fatty acid chain in fatty acid biosynthesis. This Solidesulfovibrio magneticus (strain ATCC 700980 / DSM 13731 / RS-1) (Desulfovibrio magneticus) protein is Acyl carrier protein.